Consider the following 229-residue polypeptide: Lipoprotein-releasing system ATP-binding protein LolD (229 aa).

Residues 7-229 (LQCINLTKSF…KNGQLFNNKN (223 aa)) enclose the ABC transporter domain. An ATP-binding site is contributed by 43-50 (GKSGSGKS).

The protein belongs to the ABC transporter superfamily. Lipoprotein translocase (TC 3.A.1.125) family. In terms of assembly, the complex is composed of two ATP-binding proteins (LolD) and two transmembrane proteins (LolC and LolE).

It is found in the cell inner membrane. Part of the ABC transporter complex LolCDE involved in the translocation of mature outer membrane-directed lipoproteins, from the inner membrane to the periplasmic chaperone, LolA. Responsible for the formation of the LolA-lipoprotein complex in an ATP-dependent manner. The sequence is that of Lipoprotein-releasing system ATP-binding protein LolD from Buchnera aphidicola subsp. Schizaphis graminum (strain Sg).